A 145-amino-acid chain; its full sequence is Ribonuclease VapC24 (145 aa).

Positions 4 to 123 (IDTNILLYAQ…RHHGVDEFAT (120 aa)) constitute a PINc domain. The Mg(2+) site is built by Asp-5 and Asp-106.

This sequence belongs to the PINc/VapC protein family. It depends on Mg(2+) as a cofactor.

In terms of biological role, toxic component of a type II toxin-antitoxin (TA) system. An RNase. Its cognate antitoxin is VapB24. This chain is Ribonuclease VapC24, found in Mycobacterium tuberculosis (strain CDC 1551 / Oshkosh).